A 608-amino-acid chain; its full sequence is 2',5'-phosphodiesterase 12 (608 aa).

Residues 1–16 constitute a mitochondrion transit peptide; the sequence is MWRLPGRSALRGVRSV. Positions 90-99 are enriched in basic residues; it reads AAKKSRKNRA. The disordered stretch occupies residues 90-111; the sequence is AAKKSRKNRAHSSGGAACEATG. The residue at position 216 (Ser-216) is a Phosphoserine. Mg(2+) contacts are provided by Glu-350, Asp-495, and Asn-497. Asp-495 (proton donor/acceptor) is an active-site residue.

The protein belongs to the CCR4/nocturin family. Mg(2+) serves as cofactor.

The protein localises to the mitochondrion matrix. The catalysed reaction is Exonucleolytic cleavage of poly(A) to 5'-AMP.. Functionally, enzyme that cleaves 2',5'-phosphodiester bond linking adenosines of the 5'-triphosphorylated oligoadenylates, triphosphorylated oligoadenylates referred as 2-5A modulates the 2-5A system. Degrades triphosphorylated 2-5A to produce AMP and ATP. Also cleaves 3',5'-phosphodiester bond of oligoadenylates. Plays a role as a negative regulator of the 2-5A system that is one of the major pathways for antiviral and antitumor functions induced by interferons (IFNs). Suppression of this enzyme increases cellular 2-5A levels and decreases viral replication in cultured small-airway epithelial cells. This is 2',5'-phosphodiesterase 12 (Pde12) from Mus musculus (Mouse).